The sequence spans 800 residues: Blood-group-substance endo-1,4-beta-galactosidase (800 aa).

Residues 1–35 form the signal peptide; sequence MGGVTMKNNLKKYIKYILSVILVFFVGVNGMEVYA.

The protein belongs to the glycosyl hydrolase 98 family.

It localises to the secreted. It carries out the reaction Endohydrolysis of (1-&gt;4)-beta-D-galactosidic linkages in blood group A and B substances.. Functionally, endo-beta-galactosidase capable of releasing both the blood group A trisaccharide (A-Tri; GalNAcalpha1--&gt;3(Fucalpha1--&gt;2)Gal) and B trisaccharide (B-Tri; Galalpha1--&gt;3(Fucalpha1--&gt;2)Gal) glycotopes from blood group A- and B-containing glycoconjugates, respectively. This chain is Blood-group-substance endo-1,4-beta-galactosidase (eabC), found in Clostridium perfringens.